The primary structure comprises 317 residues: Acetyl-coenzyme A carboxylase carboxyl transferase subunit alpha (317 aa).

A CoA carboxyltransferase C-terminal domain is found at 40-293 (LEVRVREAIV…GDVIASALAE (254 aa)).

It belongs to the AccA family. In terms of assembly, acetyl-CoA carboxylase is a heterohexamer composed of biotin carboxyl carrier protein (AccB), biotin carboxylase (AccC) and two subunits each of ACCase subunit alpha (AccA) and ACCase subunit beta (AccD).

It is found in the cytoplasm. The catalysed reaction is N(6)-carboxybiotinyl-L-lysyl-[protein] + acetyl-CoA = N(6)-biotinyl-L-lysyl-[protein] + malonyl-CoA. Its pathway is lipid metabolism; malonyl-CoA biosynthesis; malonyl-CoA from acetyl-CoA: step 1/1. Component of the acetyl coenzyme A carboxylase (ACC) complex. First, biotin carboxylase catalyzes the carboxylation of biotin on its carrier protein (BCCP) and then the CO(2) group is transferred by the carboxyltransferase to acetyl-CoA to form malonyl-CoA. The polypeptide is Acetyl-coenzyme A carboxylase carboxyl transferase subunit alpha (Rhizobium johnstonii (strain DSM 114642 / LMG 32736 / 3841) (Rhizobium leguminosarum bv. viciae)).